The sequence spans 341 residues: Heat-inducible transcription repressor HrcA (341 aa).

The protein belongs to the HrcA family.

In terms of biological role, negative regulator of class I heat shock genes (grpE-dnaK-dnaJ and groELS operons). Prevents heat-shock induction of these operons. In Symbiobacterium thermophilum (strain DSM 24528 / JCM 14929 / IAM 14863 / T), this protein is Heat-inducible transcription repressor HrcA.